Here is a 154-residue protein sequence, read N- to C-terminus: Endoribonuclease YbeY (154 aa).

Positions 113, 117, and 123 each coordinate Zn(2+).

It belongs to the endoribonuclease YbeY family. The cofactor is Zn(2+).

The protein resides in the cytoplasm. Single strand-specific metallo-endoribonuclease involved in late-stage 70S ribosome quality control and in maturation of the 3' terminus of the 16S rRNA. The polypeptide is Endoribonuclease YbeY (Vibrio cholerae serotype O1 (strain ATCC 39315 / El Tor Inaba N16961)).